Consider the following 371-residue polypeptide: Choline kinase B1 (371 aa).

It belongs to the choline/ethanolamine kinase family. Requires Mg(2+) as cofactor.

It carries out the reaction choline + ATP = phosphocholine + ADP + H(+). The sequence is that of Choline kinase B1 (ckb-1) from Caenorhabditis elegans.